We begin with the raw amino-acid sequence, 667 residues long: MTQEKKAEDPDRGMDTTSAAPRLWSTHCDGEVLLRLSKHGPGHETPMTIPELFQESVERFGAYPALASKNGKKWDTLTFSQYYDVCRKAARSLIKLGLQRFHGVGILGFNSVEWVVAALGAILAGGLCVGIYATNSAEACQYVIKQANVNVLIVENDQQLQKILSIPPDKMETVKAIVQYRLPLMENSTNLYSWQDFMELGNAIPNIQLDRVILSQKANQCAVIIYTSGTTGSPKGVMLSHDNITWTAGAMAREIELIHVSGKQDTIVSYLPLSHIAAQLMDIWIPIKVGVLTFFAQPDALRGTLVYTLQEVKPTYFLGVPRVWEKMQDTIKENVAKSSNLRKKAFAWAKMLGLKVNTKKMLGKRDIPMNYRMAKALVFTKVRTSLGLDNCHTFFSGASPLSQDVSEFFLSLDIPIGEIYGMTECSGPHTVSCKSIYRVLSCGKVLNGCKNMLYKQNKDGVGEVCMWGRHVFMGYLGKEDATLEVLDEDGWLHSGDIGRLDSHDFLYITGRIKEVLITAGGENIWPIPIETLVKEKIPIISHAMLVGDKAKFLSMLLTLKCETDQMSGEPLDKLNLEAISFCQMLGSQAVTVSDILKIRDPVVYTAIQYGIDIVNQQAVSDSHRIRKWIILEKDFSIQGGELGPTSKLKRDLITQKYKAQIDNMYSS.

Positions 1–14 (MTQEKKAEDPDRGM) are enriched in basic and acidic residues. The interval 1-20 (MTQEKKAEDPDRGMDTTSAA) is disordered. ATP is bound by residues 227 to 235 (TSGTTGSPK), 418 to 423 (EIYGMT), Asp-496, Arg-511, and Arg-624.

The protein belongs to the ATP-dependent AMP-binding enzyme family. Bubblegum subfamily.

It localises to the cytoplasm. Its subcellular location is the membrane. It carries out the reaction a long-chain fatty acid + ATP + CoA = a long-chain fatty acyl-CoA + AMP + diphosphate. The catalysed reaction is (5Z,8Z,11Z,14Z)-eicosatetraenoate + ATP + CoA = (5Z,8Z,11Z,14Z)-eicosatetraenoyl-CoA + AMP + diphosphate. It catalyses the reaction hexadecanoate + ATP + CoA = hexadecanoyl-CoA + AMP + diphosphate. The enzyme catalyses (9Z)-octadecenoate + ATP + CoA = (9Z)-octadecenoyl-CoA + AMP + diphosphate. It carries out the reaction (9Z,12Z)-octadecadienoate + ATP + CoA = (9Z,12Z)-octadecadienoyl-CoA + AMP + diphosphate. The catalysed reaction is tetracosanoate + ATP + CoA = tetracosanoyl-CoA + AMP + diphosphate. Catalyzes the conversion of fatty acids such as long chain and very long-chain fatty acids to their active form acyl-CoAs for both synthesis of cellular lipids, and degradation via beta-oxidation. Can activate diverse saturated, monosaturated and polyunsaturated fatty acids. Has increased ability to activate oleic and linoleic acid. May play a role in spermatogenesis. The sequence is that of Long-chain-fatty-acid--CoA ligase ACSBG2 from Rattus norvegicus (Rat).